An 81-amino-acid polypeptide reads, in one-letter code: EC protein III (81 aa).

This sequence belongs to the metallothionein superfamily. Type 15 family.

Binds 5 molecules of zinc. May have a role in Zn(2+) homeostasis during embryogenesis. In Triticum aestivum (Wheat), this protein is EC protein III.